The chain runs to 319 residues: Methionyl-tRNA formyltransferase (319 aa).

115 to 118 contacts (6S)-5,6,7,8-tetrahydrofolate; that stretch reads SLLP.

The protein belongs to the Fmt family.

It carries out the reaction L-methionyl-tRNA(fMet) + (6R)-10-formyltetrahydrofolate = N-formyl-L-methionyl-tRNA(fMet) + (6S)-5,6,7,8-tetrahydrofolate + H(+). In terms of biological role, attaches a formyl group to the free amino group of methionyl-tRNA(fMet). The formyl group appears to play a dual role in the initiator identity of N-formylmethionyl-tRNA by promoting its recognition by IF2 and preventing the misappropriation of this tRNA by the elongation apparatus. The polypeptide is Methionyl-tRNA formyltransferase (Lactococcus lactis subsp. lactis (strain IL1403) (Streptococcus lactis)).